Consider the following 378-residue polypeptide: MLQRCGRRLLLALVGALLACLLVLTADPPPTPMPAERGRRALRSLAGSSGGAPASGSRAAVDPGVLTREVHSLSEYFSLLTRARRDADPPPGVASRQGDGHPRPPAEVLSPRDVFIAVKTTRKFHRARLDLLFETWISRHKEMTFIFTDGEDEALAKLTGNVVLTNCSSAHSRQALSCKMAVEYDRFIESGKKWFCHVDDDNYVNLRALLRLLASYPHTQDVYIGKPSLDRPIQATERISEHKVRPVHFWFATGGAGFCISRGLALKMGPWASGGHFMSTAERIRLPDDCTIGYIVEALLGVPLIRSGLFHSHLENLQQVPTTELHEQVTLSYGMFENKRNAVHIKGPFSVEADPSRFRSVHCHLYPDTPWCPRSAIF.

At 1 to 8 (MLQRCGRR) the chain is on the cytoplasmic side. The helical; Signal-anchor for type II membrane protein transmembrane segment at 9–29 (LLLALVGALLACLLVLTADPP) threads the bilayer. At 30 to 378 (PTPMPAERGR…TPWCPRSAIF (349 aa)) the chain is on the lumenal side. The interval 85–108 (RDADPPPGVASRQGDGHPRPPAEV) is disordered. Arginine 128 serves as a coordination point for substrate. The N-linked (GlcNAc...) asparagine glycan is linked to asparagine 166. 2 disulfides stabilise this stretch: cysteine 167-cysteine 178 and cysteine 196-cysteine 259. Position 200 (aspartate 200) interacts with substrate. Aspartate 201 contacts Mn(2+). Residue aspartate 289 is part of the active site. Histidine 313 is a binding site for Mn(2+). Cysteines 363 and 372 form a disulfide.

This sequence belongs to the glycosyltransferase 31 family. Requires Mn(2+) as cofactor. It depends on Co(2+) as a cofactor. Post-translationally, a soluble form may be derived from the membrane form by proteolytic processing. In terms of tissue distribution, detected at 12.5 dpc in all tissues examined with the highest level observed in adult brain and spleen. Detected in the dental epithelium.

The protein resides in the golgi apparatus. It localises to the golgi apparatus membrane. It carries out the reaction 3-O-(alpha-L-fucosyl)-L-threonyl-[EGF-like domain protein] + UDP-N-acetyl-alpha-D-glucosamine = 3-O-(N-acetyl-beta-D-glucosaminyl-(1-&gt;3)-alpha-L-fucosyl)-L-threonyl-[EGF-like domain protein] + UDP + H(+). It catalyses the reaction 3-O-(alpha-L-fucosyl)-L-seryl-[EGF-like domain protein] + UDP-N-acetyl-alpha-D-glucosamine = 3-O-(N-acetyl-beta-D-glucosaminyl-(1-&gt;3)-alpha-L-fucosyl)-L-seryl-[EGF-like domain protein] + UDP + H(+). Its function is as follows. Glycosyltransferase that initiates the elongation of O-linked fucose residues attached to EGF-like repeats in the extracellular domain of Notch molecules. Modulates NOTCH1 activity by modifying O-fucose residues at specific EGF-like domains resulting in inhibition of NOTCH1 activation by JAG1 and enhancement of NOTCH1 activation by DLL1 via an increase in its binding to DLL1. Decreases the binding of JAG1 to NOTCH2 but not that of DLL1. Essential mediator of somite segmentation and patterning. During somite boundary formation, it restricts Notch activity in the presomitic mesoderm to a boundary-forming territory in the posterior half of the prospective somite. In this region, Notch function activates a set of genes that are involved in boundary formation and in anterior-posterior somite identity. Ectopically expressed in the thymus, Lfgn inhibits Notch signaling which results in inhibition of T-cell commitment and promotes B-cell development in lymphoid progenitors. May play a role in boundary formation of the enamel knot. The chain is Beta-1,3-N-acetylglucosaminyltransferase lunatic fringe from Mus musculus (Mouse).